A 610-amino-acid polypeptide reads, in one-letter code: Propanediol dehydratase-reactivating factor large subunit (610 aa).

Residue 11-13 coordinates ATP; it reads NSS. Mg(2+) contacts are provided by Thr-105, Asp-166, and Asp-183. ATP contacts are provided by residues 459-462, 557-558, and Arg-591; these read EEIK and GS.

Belongs to the DdrA/PduG family. In terms of assembly, forms a heterotetramer PduG(2)/PduH(2). The cofactor is Mg(2+).

It is found in the bacterial microcompartment. The enzyme catalyses ATP + H2O = ADP + phosphate + H(+). The protein operates within polyol metabolism; 1,2-propanediol degradation. In terms of biological role, large subunit of the propanediol dehydratase-reactivating factor (DDR), which reactivates suicidally inhibited adenosylcobalamin-dependent propanediol dehydratase (diol dehydratase, DDH) found in the bacterial microcompartment (BMC) dedicated to 1,2-propanediol (1,2-PD) degradation. Reactivates inactivated DDH in the presence of ATP, Mg(2+) and free adenosylcobalamin (AdoCbl), by mediating the exchange of the tightly bound damaged cofactor AdoCbl for a free intact one. This subunit contains the adenosine nucleotide binding site. The 1,2-PD-specific bacterial microcompartment (BMC) concentrates low levels of 1,2-PD catabolic enzymes, concentrates volatile reaction intermediates thus enhancing pathway flux and keeps the level of toxic, mutagenic propionaldehyde low. The chain is Propanediol dehydratase-reactivating factor large subunit from Salmonella typhimurium (strain LT2 / SGSC1412 / ATCC 700720).